Reading from the N-terminus, the 1418-residue chain is Alpha-latrotoxin-Lhe1a (1418 aa).

An N-terminal signal peptide occupies residues 1–20 (MIFVGETMERANHSLVRLRR). The tract at residues 17 to 20 (RLRR) is furin-like endopeptidase recognition region. Residues 238-257 (VLYALLYGTQTYISVMFFLL) form a helix H8 is the probable transmembrane region of the tetrameric pore inserted in the target cell membrane region. Cysteine 413 and cysteine 1066 are joined by a disulfide. ANK repeat units lie at residues 458 to 489 (LYNA…ATFD), 490 to 521 (QGRT…ELNQ), 525 to 554 (KGYT…SINS), 559 to 589 (FLQT…NINE), 593 to 622 (DGFT…DVNA), 626 to 656 (KGLT…DINA), 660 to 690 (NNMT…NANV), 695 to 723 (GLLS…NVNV), 729 to 758 (GGIT…NIEQ), 762 to 791 (EKYT…NFEA), 795 to 824 (SGAT…NWRD), 828 to 857 (NGQM…TVLD), 862 to 891 (NSDT…DINT), 895 to 924 (NGHA…NVYI), 928 to 957 (NGMN…KFEW), 971 to 1003 (EECA…GNFN), 1004 to 1033 (ICGP…SVDG), 1035 to 1064 (KTDT…KVNH), 1068 to 1097 (NGMT…DFRR), 1101 to 1131 (RGAT…DINI), 1137 to 1166 (DKET…DVTI), and 1170 to 1199 (YDKT…KFRR). Residues 1026 to 1032 (EEVLSVD) form a 4C4.1 epitope region. The interval 1196–1199 (KFRR) is furin-like endopeptidase recognition region. A propeptide spanning residues 1200 to 1418 (EYKSSYGEHS…SEKKIQKISI (219 aa)) is cleaved from the precursor.

Belongs to the cationic peptide 01 (latrotoxin) family. 03 (alpha-latrotoxin) subfamily. Homotetramer in membranes. Post-translationally, processed by furin-like proteases at both the N- and C-termini. In terms of tissue distribution, expressed in venom gland, cephalothorax, and abdomen tissues from both males and females.

It localises to the secreted. It is found in the target cell membrane. Presynaptic neurotoxin that causes massive release of neurotransmitters from vertebrate (but not invertebrate) nerve terminals and endocrine cells via a complex mechanism involving activation of receptor(s) and toxin insertion into the plasma membrane with subsequent pore formation. Binds to neurexin-1-alpha (NRXN1) in a calcium dependent manner, adhesion G protein-coupled receptor L1 (ADGRL1, also termed latrophilin-1 and calcium-independent receptor of latrotoxin (CIRL)), and receptor-type tyrosine-protein phosphatase S (PTPRS), also termed PTP sigma. NRXN1 and PTPRS are suggested to provide a platform for binding and subsequent pore formation events. In contrast, binding to ADGRL1 does not involve oligomerization and channel formation, but direct downstream stimulation of the synaptic fusion machinery. The polypeptide is Alpha-latrotoxin-Lhe1a (Latrodectus hesperus (Western black widow spider)).